The following is a 759-amino-acid chain: 5-methyltetrahydropteroyltriglutamate--homocysteine methyltransferase (759 aa).

5-methyltetrahydropteroyltri-L-glutamate-binding positions include 17 to 20 (RELK) and K116. Residues 430-432 (IGS) and E483 each bind L-homocysteine. L-methionine is bound by residues 430–432 (IGS) and E483. 5-methyltetrahydropteroyltri-L-glutamate-binding positions include 514–515 (RC) and W560. D598 serves as a coordination point for L-homocysteine. D598 serves as a coordination point for L-methionine. Residue E604 coordinates 5-methyltetrahydropteroyltri-L-glutamate. Zn(2+) contacts are provided by H641, C643, and E665. The Proton donor role is filled by H694. Residue C726 coordinates Zn(2+).

It belongs to the vitamin-B12 independent methionine synthase family. It depends on Zn(2+) as a cofactor.

It catalyses the reaction 5-methyltetrahydropteroyltri-L-glutamate + L-homocysteine = tetrahydropteroyltri-L-glutamate + L-methionine. Its pathway is amino-acid biosynthesis; L-methionine biosynthesis via de novo pathway; L-methionine from L-homocysteine (MetE route): step 1/1. In terms of biological role, catalyzes the transfer of a methyl group from 5-methyltetrahydrofolate to homocysteine resulting in methionine formation. In Lactococcus lactis subsp. lactis (strain IL1403) (Streptococcus lactis), this protein is 5-methyltetrahydropteroyltriglutamate--homocysteine methyltransferase.